We begin with the raw amino-acid sequence, 538 residues long: Bifunctional purine biosynthesis protein PurH (538 aa).

Residues 8-158 (IPAPDKVEIK…KNHAYVTILT (151 aa)) form the MGS-like domain.

It belongs to the PurH family.

The enzyme catalyses (6R)-10-formyltetrahydrofolate + 5-amino-1-(5-phospho-beta-D-ribosyl)imidazole-4-carboxamide = 5-formamido-1-(5-phospho-D-ribosyl)imidazole-4-carboxamide + (6S)-5,6,7,8-tetrahydrofolate. It carries out the reaction IMP + H2O = 5-formamido-1-(5-phospho-D-ribosyl)imidazole-4-carboxamide. It participates in purine metabolism; IMP biosynthesis via de novo pathway; 5-formamido-1-(5-phospho-D-ribosyl)imidazole-4-carboxamide from 5-amino-1-(5-phospho-D-ribosyl)imidazole-4-carboxamide (10-formyl THF route): step 1/1. Its pathway is purine metabolism; IMP biosynthesis via de novo pathway; IMP from 5-formamido-1-(5-phospho-D-ribosyl)imidazole-4-carboxamide: step 1/1. The polypeptide is Bifunctional purine biosynthesis protein PurH (Rhizobium etli (strain ATCC 51251 / DSM 11541 / JCM 21823 / NBRC 15573 / CFN 42)).